An 82-amino-acid chain; its full sequence is Small ribosomal subunit protein bS18 (82 aa).

This sequence belongs to the bacterial ribosomal protein bS18 family. Part of the 30S ribosomal subunit. Forms a tight heterodimer with protein bS6.

Binds as a heterodimer with protein bS6 to the central domain of the 16S rRNA, where it helps stabilize the platform of the 30S subunit. The sequence is that of Small ribosomal subunit protein bS18 from Rhizobium rhizogenes (strain K84 / ATCC BAA-868) (Agrobacterium radiobacter).